Reading from the N-terminus, the 217-residue chain is 3,4-dihydroxy-2-butanone 4-phosphate synthase (217 aa).

Residues 37–38, Asp-42, 150–154, and Glu-174 each bind D-ribulose 5-phosphate; these read RE and RRGHT. Glu-38 lines the Mg(2+) pocket. His-153 is a Mg(2+) binding site.

Belongs to the DHBP synthase family. In terms of assembly, homodimer. The cofactor is Mg(2+). It depends on Mn(2+) as a cofactor.

It carries out the reaction D-ribulose 5-phosphate = (2S)-2-hydroxy-3-oxobutyl phosphate + formate + H(+). It participates in cofactor biosynthesis; riboflavin biosynthesis; 2-hydroxy-3-oxobutyl phosphate from D-ribulose 5-phosphate: step 1/1. Its function is as follows. Catalyzes the conversion of D-ribulose 5-phosphate to formate and 3,4-dihydroxy-2-butanone 4-phosphate. The polypeptide is 3,4-dihydroxy-2-butanone 4-phosphate synthase (Tolumonas auensis (strain DSM 9187 / NBRC 110442 / TA 4)).